The primary structure comprises 294 residues: Aquaporin NIP1-2 (294 aa).

Position 1 is an N-acetylmethionine (M1). Helical transmembrane passes span 54 to 74 (LMAE…AVAV) and 82 to 102 (VTLP…VYSL). Positions 111–113 (NPA) match the NPA 1 motif. A run of 3 helical transmembrane segments spans residues 133 to 153 (VISQ…LFGL), 177 to 197 (SFVI…GVAT), and 201 to 221 (AIGE…VIIA). An NPA 2 motif is present at residues 230–232 (NPG). A helical membrane pass occupies residues 248–268 (WIYIVSPIVGAVSGAWVYNMV). Residue S283 is modified to Phosphoserine.

This sequence belongs to the MIP/aquaporin (TC 1.A.8) family. NIP (TC 1.A.8.12) subfamily. In terms of tissue distribution, expressed in developing seeds.

Its subcellular location is the membrane. Its function is as follows. Water channel probably required to promote glycerol permeability and water transport across cell membranes. The chain is Aquaporin NIP1-2 (NIP1-2) from Arabidopsis thaliana (Mouse-ear cress).